The chain runs to 227 residues: Phosphoribosylformylglycinamidine synthase subunit PurQ (227 aa).

The Glutamine amidotransferase type-1 domain maps to 2 to 227 (RWAIVRFPGA…FLGLVKEVAR (226 aa)). The Nucleophile role is filled by C85. Active-site residues include H200 and E202.

As to quaternary structure, part of the FGAM synthase complex composed of 1 PurL, 1 PurQ and 2 PurS subunits.

The protein resides in the cytoplasm. It catalyses the reaction N(2)-formyl-N(1)-(5-phospho-beta-D-ribosyl)glycinamide + L-glutamine + ATP + H2O = 2-formamido-N(1)-(5-O-phospho-beta-D-ribosyl)acetamidine + L-glutamate + ADP + phosphate + H(+). It carries out the reaction L-glutamine + H2O = L-glutamate + NH4(+). Its pathway is purine metabolism; IMP biosynthesis via de novo pathway; 5-amino-1-(5-phospho-D-ribosyl)imidazole from N(2)-formyl-N(1)-(5-phospho-D-ribosyl)glycinamide: step 1/2. Functionally, part of the phosphoribosylformylglycinamidine synthase complex involved in the purines biosynthetic pathway. Catalyzes the ATP-dependent conversion of formylglycinamide ribonucleotide (FGAR) and glutamine to yield formylglycinamidine ribonucleotide (FGAM) and glutamate. The FGAM synthase complex is composed of three subunits. PurQ produces an ammonia molecule by converting glutamine to glutamate. PurL transfers the ammonia molecule to FGAR to form FGAM in an ATP-dependent manner. PurS interacts with PurQ and PurL and is thought to assist in the transfer of the ammonia molecule from PurQ to PurL. This chain is Phosphoribosylformylglycinamidine synthase subunit PurQ, found in Thermus thermophilus (strain ATCC 27634 / DSM 579 / HB8).